We begin with the raw amino-acid sequence, 903 residues long: Protein translocase subunit SecA (903 aa).

ATP is bound by residues Gln87, 105–109, and Asp512; that span reads GEGKT. The segment at 853 to 903 is disordered; the sequence is KQQQLSHYEENALVTEDPNAPATAERKVGRNDPCPCGSGKKYKQCHGRLQS. Zn(2+)-binding residues include Cys886, Cys888, Cys897, and His898. The span at 892–903 shows a compositional bias: basic residues; the sequence is KKYKQCHGRLQS.

This sequence belongs to the SecA family. In terms of assembly, monomer and homodimer. Part of the essential Sec protein translocation apparatus which comprises SecA, SecYEG and auxiliary proteins SecDF-YajC and YidC. It depends on Zn(2+) as a cofactor.

Its subcellular location is the cell inner membrane. It is found in the cytoplasm. It carries out the reaction ATP + H2O + cellular proteinSide 1 = ADP + phosphate + cellular proteinSide 2.. Part of the Sec protein translocase complex. Interacts with the SecYEG preprotein conducting channel. Has a central role in coupling the hydrolysis of ATP to the transfer of proteins into and across the cell membrane, serving both as a receptor for the preprotein-SecB complex and as an ATP-driven molecular motor driving the stepwise translocation of polypeptide chains across the membrane. The polypeptide is Protein translocase subunit SecA (Serratia proteamaculans (strain 568)).